The primary structure comprises 78 residues: MATLTDVRNALQNAWTDDMKKAVKNAYRNAEKRASQGGNYAKCLEQASMQGTPYSLAAKKCAIENNLASTLSGLWGTS.

As to quaternary structure, homodimer.

The protein resides in the virion. Its function is as follows. Completely wraps the viral circular dsDNA genome to form a nucleoprotein filament. These interactions between the viral genome and the nucleocapsid proteins probably maintain the DNA in A-form. This certainly protects the viral DNA under conditions such as the extreme desiccation of its host. This chain is Nucleocapsid VP1, found in Sulfolobus (SPV1).